The following is a 589-amino-acid chain: Guanylate-binding protein 2 (589 aa).

The tract at residues 1–309 is GTPase domain (Globular); that stretch reads MASEIHMSEP…GAISNGSLPC (309 aa). Positions 35–276 constitute a GB1/RHD3-type G domain; sequence TQPVVVVAIV…FTSYILSYSS (242 aa). GTP is bound by residues 45–52, 181–182, and Leu-245; these read GLYRTGKS and RD. Position 586 is a cysteine methyl ester (Cys-586). A lipid anchor (S-geranylgeranyl cysteine) is attached at Cys-586. Positions 587–589 are cleaved as a propeptide — removed in mature form; the sequence is TIL.

The protein belongs to the TRAFAC class dynamin-like GTPase superfamily. GB1/RHD3 GTPase family. GB1 subfamily. Homodimer; homodimerization occurs upon GTP-binding and is required for the association with membranous structures. Heterodimer with other family members, including GBP1, GBP3, GBP4 and GBP5. In terms of processing, isoprenylation is required for proper subcellular location.

The protein resides in the cytoplasmic vesicle membrane. Its subcellular location is the golgi apparatus membrane. It localises to the cytoplasm. It is found in the perinuclear region. The catalysed reaction is GTP + H2O = GDP + phosphate + H(+). Its function is as follows. Interferon (IFN)-inducible GTPase that plays important roles in innate immunity against a diverse range of bacterial, viral and protozoan pathogens. Hydrolyzes GTP to GMP in 2 consecutive cleavage reactions, but the major reaction product is GDP. Following infection, recruited to the pathogen-containing vacuoles or vacuole-escaped bacteria and acts as a positive regulator of inflammasome assembly by promoting the release of inflammasome ligands from bacteria. Acts by promoting lysis of pathogen-containing vacuoles, releasing pathogens into the cytosol. Following pathogen release in the cytosol, promotes recruitment of proteins that mediate bacterial cytolysis, such as Gm12250/Irgb10: this liberates ligands that are detected by inflammasomes, such as lipopolysaccharide (LPS) that activates the non-canonical CASP4/CASP11 inflammasome or double-stranded DNA (dsDNA) that activates the AIM2 inflammasome. Confers protection to the protozoan pathogen Toxoplasma gondii. Independently of its GTPase activity, acts as an inhibitor of various viruses infectivity by inhibiting FURIN-mediated maturation of viral envelope proteins. This is Guanylate-binding protein 2 from Mus musculus (Mouse).